The chain runs to 339 residues: Ribosomal RNA large subunit methyltransferase M (339 aa).

S-adenosyl-L-methionine contacts are provided by residues Ser-176, 206–209, Asp-225, Asp-245, and Asp-261; that span reads APGG. Catalysis depends on Lys-290, which acts as the Proton acceptor.

It belongs to the class I-like SAM-binding methyltransferase superfamily. RNA methyltransferase RlmE family. RlmM subfamily. In terms of assembly, monomer.

It is found in the cytoplasm. The catalysed reaction is cytidine(2498) in 23S rRNA + S-adenosyl-L-methionine = 2'-O-methylcytidine(2498) in 23S rRNA + S-adenosyl-L-homocysteine + H(+). Functionally, catalyzes the 2'-O-methylation at nucleotide C2498 in 23S rRNA. The protein is Ribosomal RNA large subunit methyltransferase M of Halorhodospira halophila (strain DSM 244 / SL1) (Ectothiorhodospira halophila (strain DSM 244 / SL1)).